The chain runs to 301 residues: t-SNARE affecting a late Golgi compartment protein 2 (301 aa).

Residues 1–279 (MAYRDRTGLY…SHQKNTGRLR (279 aa)) lie on the Cytoplasmic side of the membrane. Positions 92–120 (SDKTEQENEIQRLTIQITQDFQRCQKLLQ) form a coiled coil. Positions 206–268 (DEQAIRHERA…KSAEKELIKA (63 aa)) constitute a t-SNARE coiled-coil homology domain. Residues 280–300 (FICFLILLIVALIVILAIKLL) traverse the membrane as a helical; Anchor for type IV membrane protein segment. A topological domain (vesicular) is located at residue Arg-301.

It belongs to the syntaxin family.

Its subcellular location is the golgi apparatus. The protein resides in the trans-Golgi network membrane. The protein localises to the endosome membrane. Its function is as follows. t-SNARE that functions in transport from the endosome to the late Golgi and on the endocytic pathway. The chain is t-SNARE affecting a late Golgi compartment protein 2 (tlg2) from Schizosaccharomyces pombe (strain 972 / ATCC 24843) (Fission yeast).